Reading from the N-terminus, the 260-residue chain is Pro-thyrotropin-releasing hormone (260 aa).

The first 24 residues, 1–24, serve as a signal peptide directing secretion; that stretch reads MPSIQLPVLLLCLTLSGVCLNGRQ. The tract at residues 72-112 is disordered; the sequence is PQWLSKRQHPGKRYISDPEKRQHPGKRDVEEKASFGDIQKR. At Q79 the chain carries Pyrrolidone carboxylic acid. P81 is modified (proline amide). Positions 85–112 are enriched in basic and acidic residues; sequence YISDPEKRQHPGKRDVEEKASFGDIQKR. Q93 is modified (pyrrolidone carboxylic acid). Position 95 is a proline amide (P95). Q113 is modified (pyrrolidone carboxylic acid). Residue L115 is modified to Leucine amide. At Q134 the chain carries Pyrrolidone carboxylic acid. P136 carries the proline amide modification. Residue Q163 is modified to Pyrrolidone carboxylic acid. P165 bears the Proline amide mark. Residues 195–207 show a composition bias toward basic and acidic residues; that stretch reads KHQQFGNRDRDSD. Disordered regions lie at residues 195–217 and 238–260; these read KHQQFGNRDRDSDSPDYTGPCDL and KEGVEEKHQHPGRRSAWENETEE. A Pyrrolidone carboxylic acid modification is found at Q246. At P248 the chain carries Proline amide.

This sequence belongs to the TRH family.

The protein resides in the secreted. Functionally, functions as a regulator of the biosynthesis of TSH in the anterior pituitary gland and as a neurotransmitter/ neuromodulator in the central and peripheral nervous systems. This chain is Pro-thyrotropin-releasing hormone (TRH), found in Gallus gallus (Chicken).